The following is a 257-amino-acid chain: Putative hydro-lyase Bcep18194_B2576 (257 aa).

The protein belongs to the D-glutamate cyclase family.

This Burkholderia lata (strain ATCC 17760 / DSM 23089 / LMG 22485 / NCIMB 9086 / R18194 / 383) protein is Putative hydro-lyase Bcep18194_B2576.